The primary structure comprises 110 residues: Large ribosomal subunit protein uL22 (110 aa).

Belongs to the universal ribosomal protein uL22 family. In terms of assembly, part of the 50S ribosomal subunit.

Functionally, this protein binds specifically to 23S rRNA; its binding is stimulated by other ribosomal proteins, e.g. L4, L17, and L20. It is important during the early stages of 50S assembly. It makes multiple contacts with different domains of the 23S rRNA in the assembled 50S subunit and ribosome. In terms of biological role, the globular domain of the protein is located near the polypeptide exit tunnel on the outside of the subunit, while an extended beta-hairpin is found that lines the wall of the exit tunnel in the center of the 70S ribosome. The polypeptide is Large ribosomal subunit protein uL22 (Shigella flexneri serotype 5b (strain 8401)).